Consider the following 60-residue polypeptide: Large ribosomal subunit protein uL30 (60 aa).

It belongs to the universal ribosomal protein uL30 family. In terms of assembly, part of the 50S ribosomal subunit.

The sequence is that of Large ribosomal subunit protein uL30 from Pseudoalteromonas translucida (strain TAC 125).